Consider the following 482-residue polypeptide: E3 ubiquitin-protein ligase makorin-1 (482 aa).

Positions 26–38 (ASPTPIPTVTAPS) are enriched in low complexity. Residues 26-52 (ASPTPIPTVTAPSLGAGGGGGGSDGSG) are disordered. The span at 40-52 (GAGGGGGGSDGSG) shows a compositional bias: gly residues. C3H1-type zinc fingers lie at residues 55 to 82 (WTKQVTCRYFMHGVCKEGDNCRYSHDLS), 84 to 111 (SPYSVVCKYFQRGYCIYGDRCRYEHSKP), and 208 to 235 (ETKKQLCPYAAVGECRYGENCVYLHGDS). Residues 236–263 (CDMCGLQVLHPMDAAQRSQHIKSCIEAH) are makorin-type Cys-His. An RING-type zinc finger spans residues 281-335 (CGICMEVVYEKANPSERRFGILSNCNHTYCLKCIRKWRSAKQFESKIIKSCPECR). Residues 364–393 (AMSNKACRYFDEGRGSCPFGGNCFYKHAYP) form a C3H1-type 4 zinc finger.

In terms of assembly, interacts with p53/TP53 and CDKN1A. Interacts with TERT, modulating telomere length homeostasis. In terms of processing, auto-ubiquitinated; which leads to proteasomal degradation. Ubiquitous.

The enzyme catalyses S-ubiquitinyl-[E2 ubiquitin-conjugating enzyme]-L-cysteine + [acceptor protein]-L-lysine = [E2 ubiquitin-conjugating enzyme]-L-cysteine + N(6)-ubiquitinyl-[acceptor protein]-L-lysine.. The protein operates within protein modification; protein ubiquitination. Functionally, E3 ubiquitin ligase catalyzing the covalent attachment of ubiquitin moieties onto substrate proteins. These substrates include FILIP1, p53/TP53, CDKN1A and TERT. Keeps cells alive by suppressing p53/TP53 under normal conditions, but stimulates apoptosis by repressing CDKN1A under stress conditions. Acts as a negative regulator of telomerase. Has negative and positive effects on RNA polymerase II-dependent transcription. The polypeptide is E3 ubiquitin-protein ligase makorin-1 (MKRN1) (Homo sapiens (Human)).